The primary structure comprises 212 residues: uncharacterized protein (212 aa).

S-adenosyl-L-methionine contacts are provided by glycine 53, glutamate 74, and aspartate 97.

The protein belongs to the methyltransferase superfamily. YrrT family.

In terms of biological role, could be a S-adenosyl-L-methionine-dependent methyltransferase. This is an uncharacterized protein from Bacillus mycoides (strain KBAB4) (Bacillus weihenstephanensis).